The chain runs to 348 residues: Uroporphyrinogen decarboxylase (348 aa).

Substrate contacts are provided by residues 27-31 (RQAGR), F46, D76, Y152, S207, and H320.

This sequence belongs to the uroporphyrinogen decarboxylase family. Homodimer.

It is found in the cytoplasm. The enzyme catalyses uroporphyrinogen III + 4 H(+) = coproporphyrinogen III + 4 CO2. It participates in porphyrin-containing compound metabolism; protoporphyrin-IX biosynthesis; coproporphyrinogen-III from 5-aminolevulinate: step 4/4. Its function is as follows. Catalyzes the decarboxylation of four acetate groups of uroporphyrinogen-III to yield coproporphyrinogen-III. The polypeptide is Uroporphyrinogen decarboxylase (Bacillus cereus (strain B4264)).